A 1328-amino-acid polypeptide reads, in one-letter code: WASH complex subunit 2 (1328 aa).

A sufficient for interaction with WASHC3, WASHC4 and WASHC5; required for interaction with WASHC1 region spans residues 1-219; that stretch reads MNRTSPDSEQ…VGSDRGSIVD (219 aa). Ser-157, Ser-159, Ser-204, Ser-205, and Ser-209 each carry phosphoserine. Residues 201 to 213 show a composition bias toward low complexity; it reads GELSSEEGSVGSD. 2 disordered regions span residues 201–655 and 675–830; these read GELS…KTNL and KKTQ…PKST. Composition is skewed to acidic residues over residues 219–231 and 248–273; these read DSED…ESDD and SDEE…EDIE. Phosphoserine is present on Ser-283. The segment covering 288-323 has biased composition (basic and acidic residues); sequence LAARIKGDVSNQRKEGHTDGKPQRTVKEKKERRTPA. Thr-321 is subject to Phosphothreonine. Positions 346–592 are sufficient for interaction with CCDC93; sequence SRGGLFSDRQ…QTSSLPPQSQ (247 aa). The interval 347 to 1328 is interaction with VPS35; it reads RGGLFSDRQG…DDPLNAFGSQ (982 aa). The LFa 1 signature appears at 357 to 367; it reads LFDDDDESDLF. 2 positions are modified to phosphoserine: Ser-384 and Ser-387. 2 short sequence motifs (LFa) span residues 440–455 and 474–483; these read LFDD…DNFF and IFDDDEGDLF. The segment covering 441–453 has biased composition (acidic residues); it reads FDDDDNDSDEDDN. Polar residues predominate over residues 508-528; that stretch reads TITLPSSKNPKLVSETKTQKG. 2 consecutive short sequence motifs (LFa) follow at residues 529–540 and 564–575; these read LFSDEEDSEDLF and LFGDEDEEDNLF. A phosphoserine mark is found at Ser-531 and Ser-536. Residues 539–556 show a composition bias toward low complexity; it reads LFSSQSSSKTKSASVLSS. The segment covering 582–592 has biased composition (polar residues); that stretch reads KQTSSLPPQSQ. Phosphoserine occurs at positions 610 and 611. Over residues 627–638 the composition is skewed to basic and acidic residues; it reads ASERKSKGERWD. 2 consecutive short sequence motifs (LFa) follow at residues 655–667 and 683–695; these read LFEE…VDLF and LFED…SSLF. The segment covering 690-699 has biased composition (polar residues); it reads SGSSLFSLPP. Residues Ser-720, Ser-744, Ser-749, Ser-780, and Ser-795 each carry the phosphoserine modification. Residues 797-808 show a composition bias toward acidic residues; that stretch reads FDEDEDKVEDDS. Short sequence motifs (LFa) lie at residues 832–840 and 849–855; these read VFQDEELLF and DPDVDLF. Disordered stretches follow at residues 863–940 and 991–1088; these read LSMP…EPSS and PTLP…AMAV. Phosphoserine occurs at positions 867 and 870. The LFa 10 signature appears at 871 to 881; the sequence is LFGDDDDDDLF. Over residues 894-919 the composition is skewed to basic and acidic residues; sequence PEKKGTLRKDHKPPELTEGSKEKSTW. The interval 925-1328 is interaction with phospholipids; that stretch reads QDSSGLTPFK…DDPLNAFGSQ (404 aa). Residues 1016 to 1034 show a composition bias toward basic residues; the sequence is NKGRVKVRGKRRPQTRAAR. Residues 1017 to 1035 are required for interaction with F-actin-capping protein subunit alpha (CAPZA1 or CAPZA2 or CAPZA3); it reads KGRVKVRGKRRPQTRAARR. Phosphoserine is present on residues Ser-1042, Ser-1060, Ser-1077, and Ser-1102. Residues 1115-1210 are disordered; that stretch reads AHLFDSGDIF…KKNQWKSDSH (96 aa). 3 short sequence motifs (LFa) span residues 1117 to 1124, 1157 to 1171, and 1187 to 1195; these read LFDSGDIF, VFPD…DDLF, and LLEDEEDLF. 2 positions are modified to phosphoserine: Ser-1162 and Ser-1165. Residues 1196-1210 show a composition bias toward basic and acidic residues; it reads ADQKGKKNQWKSDSH. 3 consecutive short sequence motifs (LFa) follow at residues 1220–1226, 1249–1257, and 1277–1286; these read IFEDDIF, LFDDNIDIF, and MFDDDTDDIF. Residues 1289–1310 are disordered; it reads GLQAKASKPKSQSAEAVSELRS. Positions 1317-1325 match the LFa 17 motif; the sequence is IFDDPLNAF. Ser-1327 bears the Phosphoserine mark.

Belongs to the FAM21 family. As to quaternary structure, component of the WASH core complex also described as WASH regulatory complex (SHRC) composed of WASHC1, WASHC2, WASHC3, WASHC4 and WASHC5; in the complex interacts (via N-terminus) directly with WASHC1. The WASH core complex associates with the F-actin-capping protein dimer (formed by CAPZA1, CAPZA2 or CAPZA3 and CAPZB) in a transient or substoichiometric manner which was initially described as WASH complex. Interacts with VPS35; mediates the association with the retromer CSC complex. Interacts with FKBP15. Interacts with CCDC93, CCDC22, VPS35L; indicative for an association of the WASH core complex with the CCC and retriever complexes. Directly interacts with TBC1D23.

Its subcellular location is the early endosome membrane. The protein resides in the cell membrane. In terms of biological role, acts as a component of the WASH core complex that functions as a nucleation-promoting factor (NPF) at the surface of endosomes, where it recruits and activates the Arp2/3 complex to induce actin polymerization, playing a key role in the fission of tubules that serve as transport intermediates during endosome sorting. Mediates the recruitment of the WASH core complex to endosome membranes via binding to phospholipids and VPS35 of the retromer CSC. Mediates the recruitment of the F-actin-capping protein dimer to the WASH core complex probably promoting localized F-actin polymerization needed for vesicle scission. Via its C-terminus binds various phospholipids, most strongly phosphatidylinositol 4-phosphate (PtdIns-(4)P), phosphatidylinositol 5-phosphate (PtdIns-(5)P) and phosphatidylinositol 3,5-bisphosphate (PtdIns-(3,5)P2). Involved in the endosome-to-plasma membrane trafficking and recycling of SNX27-retromer-dependent cargo proteins, such as GLUT1. Required for the association of DNAJC13, ENTR1, ANKRD50 with retromer CSC subunit VPS35. Required for the endosomal recruitment of CCC and retriever complexes subunits COMMD1 and CCDC93 as well as the retrievere complex subunit VPS35L. This is WASH complex subunit 2 from Rattus norvegicus (Rat).